We begin with the raw amino-acid sequence, 547 residues long: Glucose-6-phosphate isomerase 2 (547 aa).

The active-site Proton donor is Glu-351. Catalysis depends on residues His-382 and Lys-508.

Belongs to the GPI family.

It localises to the cytoplasm. It catalyses the reaction alpha-D-glucose 6-phosphate = beta-D-fructose 6-phosphate. Its pathway is carbohydrate biosynthesis; gluconeogenesis. It participates in carbohydrate degradation; glycolysis; D-glyceraldehyde 3-phosphate and glycerone phosphate from D-glucose: step 2/4. In terms of biological role, catalyzes the reversible isomerization of glucose-6-phosphate to fructose-6-phosphate. This chain is Glucose-6-phosphate isomerase 2, found in Neisseria meningitidis serogroup A / serotype 4A (strain DSM 15465 / Z2491).